A 271-amino-acid chain; its full sequence is ATP synthase subunit a (271 aa).

Helical transmembrane passes span 38 to 58, 100 to 120, 146 to 166, 220 to 240, and 242 to 262; these read FWTL…LFLL, LIAP…LMDL, DVNI…FYSI, LIFI…LNVP, and AIFH…LTIV.

Belongs to the ATPase A chain family. In terms of assembly, F-type ATPases have 2 components, CF(1) - the catalytic core - and CF(0) - the membrane proton channel. CF(1) has five subunits: alpha(3), beta(3), gamma(1), delta(1), epsilon(1). CF(0) has three main subunits: a(1), b(2) and c(9-12). The alpha and beta chains form an alternating ring which encloses part of the gamma chain. CF(1) is attached to CF(0) by a central stalk formed by the gamma and epsilon chains, while a peripheral stalk is formed by the delta and b chains.

Its subcellular location is the cell inner membrane. Functionally, key component of the proton channel; it plays a direct role in the translocation of protons across the membrane. This Citrobacter koseri (strain ATCC BAA-895 / CDC 4225-83 / SGSC4696) protein is ATP synthase subunit a.